The primary structure comprises 282 residues: Elongation factor Ts (282 aa).

Residues 80-83 (TDFV) are involved in Mg(2+) ion dislocation from EF-Tu.

It belongs to the EF-Ts family.

It localises to the cytoplasm. Associates with the EF-Tu.GDP complex and induces the exchange of GDP to GTP. It remains bound to the aminoacyl-tRNA.EF-Tu.GTP complex up to the GTP hydrolysis stage on the ribosome. The sequence is that of Elongation factor Ts (tsf) from Chlamydia trachomatis serovar D (strain ATCC VR-885 / DSM 19411 / UW-3/Cx).